The primary structure comprises 195 residues: Cholesin (195 aa).

Residues 1 to 78 (MAKHKRKGLE…KEEKKRLREA (78 aa)) are disordered. Composition is skewed to basic and acidic residues over residues 8-18 (GLEGTGKESKR) and 26-39 (ETPRTSEAGPDKET). Residues Ser-41, Ser-48, and Ser-52 each carry the phosphoserine modification. The span at 53-77 (PEERRVLERKLKKERKKEEKKRLRE) shows a compositional bias: basic and acidic residues. Ser-96 is subject to Phosphoserine.

As to expression, secreted via exosomes, secreted from the instestine, secretion is induced by feeding and cholesterol absorption. Expressed in enterocytes.

It localises to the secreted. Functionally, hormone secreted from the intestine in response to cholesterol, where it acts to inhibit cholesterol synthesis in the liver and VLDL secretion,leading to a reduction in circulating cholesterol levels. Acts through binding to its receptor, GPR146. This Mus musculus (Mouse) protein is Cholesin (Chlsn).